A 397-amino-acid polypeptide reads, in one-letter code: Acetate kinase 2 (397 aa).

Asn8 provides a ligand contact to Mg(2+). Lys15 lines the ATP pocket. Arg89 contacts substrate. Asp146 acts as the Proton donor/acceptor in catalysis. ATP contacts are provided by residues 206-210, 281-283, and 329-333; these read HLGNG, DLR, and GIGEN. Glu382 is a Mg(2+) binding site.

This sequence belongs to the acetokinase family. As to quaternary structure, homodimer. Mg(2+) serves as cofactor. It depends on Mn(2+) as a cofactor.

The protein resides in the cytoplasm. The enzyme catalyses acetate + ATP = acetyl phosphate + ADP. Its pathway is metabolic intermediate biosynthesis; acetyl-CoA biosynthesis; acetyl-CoA from acetate: step 1/2. Functionally, catalyzes the formation of acetyl phosphate from acetate and ATP. Can also catalyze the reverse reaction. The chain is Acetate kinase 2 from Listeria monocytogenes serotype 4b (strain F2365).